The chain runs to 222 residues: Large ribosomal subunit protein uL4 (222 aa).

The interval 67–87 (QKGTGNARAGSKRTNVRRGGG) is disordered.

The protein belongs to the universal ribosomal protein uL4 family. In terms of assembly, part of the 50S ribosomal subunit.

Its function is as follows. One of the primary rRNA binding proteins, this protein initially binds near the 5'-end of the 23S rRNA. It is important during the early stages of 50S assembly. It makes multiple contacts with different domains of the 23S rRNA in the assembled 50S subunit and ribosome. Forms part of the polypeptide exit tunnel. The protein is Large ribosomal subunit protein uL4 of Rhodopirellula baltica (strain DSM 10527 / NCIMB 13988 / SH1).